The primary structure comprises 356 residues: Cobalt-precorrin-5B C(1)-methyltransferase (356 aa).

Belongs to the CbiD family.

It carries out the reaction Co-precorrin-5B + S-adenosyl-L-methionine = Co-precorrin-6A + S-adenosyl-L-homocysteine. The protein operates within cofactor biosynthesis; adenosylcobalamin biosynthesis; cob(II)yrinate a,c-diamide from sirohydrochlorin (anaerobic route): step 6/10. Functionally, catalyzes the methylation of C-1 in cobalt-precorrin-5B to form cobalt-precorrin-6A. This chain is Cobalt-precorrin-5B C(1)-methyltransferase, found in Geobacter sp. (strain M21).